The sequence spans 181 residues: uncharacterized protein (181 aa).

One can recognise a Macro domain in the interval 1-178 (MVVAYKLSNG…VFKKVFDNSL (178 aa)).

This is an uncharacterized protein from Sulfolobus acidocaldarius (strain ATCC 33909 / DSM 639 / JCM 8929 / NBRC 15157 / NCIMB 11770).